Consider the following 185-residue polypeptide: Ribosome-recycling factor (185 aa).

It belongs to the RRF family.

Its subcellular location is the cytoplasm. Functionally, responsible for the release of ribosomes from messenger RNA at the termination of protein biosynthesis. May increase the efficiency of translation by recycling ribosomes from one round of translation to another. This is Ribosome-recycling factor from Marinomonas sp. (strain MWYL1).